Reading from the N-terminus, the 78-residue chain is Acyl carrier protein (78 aa).

The region spanning 2 to 77 (STIEERVKKI…AAIDYVNSHQ (76 aa)) is the Carrier domain. At Ser-37 the chain carries O-(pantetheine 4'-phosphoryl)serine.

This sequence belongs to the acyl carrier protein (ACP) family. In terms of processing, 4'-phosphopantetheine is transferred from CoA to a specific serine of apo-ACP by AcpS. This modification is essential for activity because fatty acids are bound in thioester linkage to the sulfhydryl of the prosthetic group.

Its subcellular location is the cytoplasm. Its pathway is lipid metabolism; fatty acid biosynthesis. In terms of biological role, carrier of the growing fatty acid chain in fatty acid biosynthesis. This Pseudomonas putida (strain W619) protein is Acyl carrier protein.